A 150-amino-acid chain; its full sequence is Macrodomain Ter protein (150 aa).

The protein belongs to the MatP family. Homodimer.

The protein resides in the cytoplasm. Functionally, required for spatial organization of the terminus region of the chromosome (Ter macrodomain) during the cell cycle. Prevents early segregation of duplicated Ter macrodomains during cell division. Binds specifically to matS, which is a 13 bp signature motif repeated within the Ter macrodomain. The protein is Macrodomain Ter protein of Shigella dysenteriae serotype 1 (strain Sd197).